The primary structure comprises 203 residues: Holliday junction branch migration complex subunit RuvA (203 aa).

The tract at residues Met-1 to Asn-64 is domain I. Positions Asn-65–Pro-142 are domain II. The interval Ala-143–Pro-154 is flexible linker. Residues Ala-155–Leu-203 form a domain III region.

The protein belongs to the RuvA family. Homotetramer. Forms an RuvA(8)-RuvB(12)-Holliday junction (HJ) complex. HJ DNA is sandwiched between 2 RuvA tetramers; dsDNA enters through RuvA and exits via RuvB. An RuvB hexamer assembles on each DNA strand where it exits the tetramer. Each RuvB hexamer is contacted by two RuvA subunits (via domain III) on 2 adjacent RuvB subunits; this complex drives branch migration. In the full resolvosome a probable DNA-RuvA(4)-RuvB(12)-RuvC(2) complex forms which resolves the HJ.

The protein localises to the cytoplasm. Functionally, the RuvA-RuvB-RuvC complex processes Holliday junction (HJ) DNA during genetic recombination and DNA repair, while the RuvA-RuvB complex plays an important role in the rescue of blocked DNA replication forks via replication fork reversal (RFR). RuvA specifically binds to HJ cruciform DNA, conferring on it an open structure. The RuvB hexamer acts as an ATP-dependent pump, pulling dsDNA into and through the RuvAB complex. HJ branch migration allows RuvC to scan DNA until it finds its consensus sequence, where it cleaves and resolves the cruciform DNA. The chain is Holliday junction branch migration complex subunit RuvA from Escherichia coli O9:H4 (strain HS).